We begin with the raw amino-acid sequence, 338 residues long: Tetraacyldisaccharide 4'-kinase (338 aa).

66–73 (IAGGAGKT) is a binding site for ATP.

This sequence belongs to the LpxK family.

The enzyme catalyses a lipid A disaccharide + ATP = a lipid IVA + ADP + H(+). The protein operates within glycolipid biosynthesis; lipid IV(A) biosynthesis; lipid IV(A) from (3R)-3-hydroxytetradecanoyl-[acyl-carrier-protein] and UDP-N-acetyl-alpha-D-glucosamine: step 6/6. Functionally, transfers the gamma-phosphate of ATP to the 4'-position of a tetraacyldisaccharide 1-phosphate intermediate (termed DS-1-P) to form tetraacyldisaccharide 1,4'-bis-phosphate (lipid IVA). In Delftia acidovorans (strain DSM 14801 / SPH-1), this protein is Tetraacyldisaccharide 4'-kinase.